The following is a 306-amino-acid chain: MGNLVIGSRGSELALWQANHIKERLKKECLIESEIQIVKTKGDKILDTPLNKIGGKGLFTKELEELLLKGEIDLAVHSLKDVPVVFEKGLDLACITKRADVRDTFLSVKFPDLMSLPKGAKVGTTSLRRSMQIKLKRQDLDTESLRGNVQTRLKKLECGEFDAIILAEAGLCRLEIQGAKYRKAFSVKEMIPSMGQGALGVEMLKNHKHFITLQKLNDEKSAFCCRLEREFIKGLNGGCQIPIGVHASLMGDRVKIQAVLGLPNGKEVIAKEKQGDKTKAFDLVQELLEEFLQSGAKEILEKAQLF.

The residue at position 239 (cysteine 239) is an S-(dipyrrolylmethanemethyl)cysteine.

Belongs to the HMBS family. In terms of assembly, monomer. Requires dipyrromethane as cofactor.

It catalyses the reaction 4 porphobilinogen + H2O = hydroxymethylbilane + 4 NH4(+). It functions in the pathway porphyrin-containing compound metabolism; protoporphyrin-IX biosynthesis; coproporphyrinogen-III from 5-aminolevulinate: step 2/4. Tetrapolymerization of the monopyrrole PBG into the hydroxymethylbilane pre-uroporphyrinogen in several discrete steps. This is Porphobilinogen deaminase from Helicobacter pylori (strain HPAG1).